The primary structure comprises 284 residues: 4-diphosphocytidyl-2-C-methyl-D-erythritol kinase (284 aa).

Lysine 14 is a catalytic residue. ATP is bound at residue proline 98–serine 108. Aspartate 140 is an active-site residue.

This sequence belongs to the GHMP kinase family. IspE subfamily.

The catalysed reaction is 4-CDP-2-C-methyl-D-erythritol + ATP = 4-CDP-2-C-methyl-D-erythritol 2-phosphate + ADP + H(+). Its pathway is isoprenoid biosynthesis; isopentenyl diphosphate biosynthesis via DXP pathway; isopentenyl diphosphate from 1-deoxy-D-xylulose 5-phosphate: step 3/6. Functionally, catalyzes the phosphorylation of the position 2 hydroxy group of 4-diphosphocytidyl-2C-methyl-D-erythritol. The protein is 4-diphosphocytidyl-2-C-methyl-D-erythritol kinase of Shewanella woodyi (strain ATCC 51908 / MS32).